A 78-amino-acid polypeptide reads, in one-letter code: Acyl carrier protein (78 aa).

The region spanning 2 to 77 is the Carrier domain; that stretch reads STIEERVKKI…AAIDYINGHQ (76 aa). Ser37 carries the O-(pantetheine 4'-phosphoryl)serine modification.

This sequence belongs to the acyl carrier protein (ACP) family. 4'-phosphopantetheine is transferred from CoA to a specific serine of apo-ACP by AcpS. This modification is essential for activity because fatty acids are bound in thioester linkage to the sulfhydryl of the prosthetic group.

The protein localises to the cytoplasm. It functions in the pathway lipid metabolism; fatty acid biosynthesis. In terms of biological role, carrier of the growing fatty acid chain in fatty acid biosynthesis. The sequence is that of Acyl carrier protein from Shigella flexneri.